The chain runs to 220 residues: Redox-sensing transcriptional repressor Rex (220 aa).

The H-T-H motif DNA-binding region spans 16–55 (MYVQVLETLKREGSQVVSSELLARTCSVNPSQIRKDLAYF). 90-95 (GIGNLG) provides a ligand contact to NAD(+).

The protein belongs to the transcriptional regulatory Rex family. As to quaternary structure, homodimer.

The protein localises to the cytoplasm. In terms of biological role, modulates transcription in response to changes in cellular NADH/NAD(+) redox state. In Solidesulfovibrio magneticus (strain ATCC 700980 / DSM 13731 / RS-1) (Desulfovibrio magneticus), this protein is Redox-sensing transcriptional repressor Rex.